Consider the following 138-residue polypeptide: Sporulation-specific cell division protein SsgB (138 aa).

The protein belongs to the SsgA family. Monomer. Interacts with SsgA. Interacts with FtsZ (via N-terminus).

Its subcellular location is the cell septum. Functionally, involved in sporulation-specific cell division. Required for early stages of sporulation. Important in the process of growth cessation prior to sporulation-specific cell division. Recruits cell division protein FtsZ to the future septum sites and tethers the contractile ring structure (Z ring) to the cytoplasmic membrane during sporulation. Stimulates polymerization and filament length of FtsZ in vitro. The polypeptide is Sporulation-specific cell division protein SsgB (Thermobifida fusca (strain YX)).